A 625-amino-acid chain; its full sequence is Prothrombin (625 aa).

An N-terminal signal peptide occupies residues 1–24 (MARVRGPRLPGCLALAALFSLVHS). The propeptide occupies 25-43 (QHVFLAHQQASSLLQRARR). The 47-residue stretch at 44–90 (ANKGFLEEVRKGNLERECLEEPCSREEAFEALESLSATDAFWAKYTA) folds into the Gla domain. Residues Glu-50, Glu-51, Glu-58, Glu-60, Glu-63, Glu-64, Glu-69, Glu-70, Glu-73, and Glu-76 each carry the 4-carboxyglutamate modification. A disulfide bridge connects residues Cys-61 and Cys-66. 11 cysteine pairs are disulfide-bonded: Cys-91-Cys-104, Cys-109-Cys-187, Cys-130-Cys-170, Cys-158-Cys-182, Cys-214-Cys-292, Cys-235-Cys-275, Cys-263-Cys-287, Cys-339-Cys-485, Cys-394-Cys-410, Cys-539-Cys-553, and Cys-567-Cys-597. Kringle domains are found at residues 109-187 (CAEG…VPVC) and 214-292 (CVPD…LNYC). Asn-120 and Asn-144 each carry an N-linked (GlcNAc...) asparagine glycan. The 255-residue stretch at 367-621 (IVEGQDAEVG…LKKWIQKVID (255 aa)) folds into the Peptidase S1 domain. His-409 (charge relay system) is an active-site residue. A glycan (N-linked (GlcNAc...) asparagine) is linked at Asn-419. Asp-465 (charge relay system) is an active-site residue. The high affinity receptor-binding region which is also known as the TP508 peptide stretch occupies residues 554 to 576 (AGYKPGEGKRGDACEGDSGGPFV). The Charge relay system role is filled by Ser-571.

Belongs to the peptidase S1 family. In terms of assembly, heterodimer (named alpha-thrombin) of a light and a heavy chain; disulfide-linked. Forms a heterodimer with SERPINA5. In plasma, interacts (via N-terminus) with alpha-1-microglobulin; this interaction does not prevent the activation of prothrombin to thrombin. The gamma-carboxyglutamyl residues, which bind calcium ions, result from the carboxylation of glutamyl residues by a microsomal enzyme, the vitamin K-dependent carboxylase. The modified residues are necessary for the calcium-dependent interaction with a negatively charged phospholipid surface, which is essential for the conversion of prothrombin to thrombin. In terms of processing, in the penultimate step of the coagulation cascade, prothrombin is converted to thrombin by the prothrombinase complex composed of factor Xa (F10), cofactor Va (F5), and phospholipids. This activation requires factor Xa-catalyzed sequential cleavage at 2 sites, Arg-317 and Arg-366, along 2 possible pathways. In the first pathway, the first cleavage occurs at Arg-317, leading to the formation of the inactive intermediate prethrombin-2. This pathway preferentially occurs on platelets and in the absence of cofactor Va. In the second pathway, the first cleavage occurs at Arg-366, which separates protease domain into 2 chains that remain connected through a disulfide bond and generates the active intermediate meizothrombin. The presence of cofactor Va directs activation along the meizothrombin pathway and greatly accelerates the rate of cleavage at Arg-366, but has a smaller effect on the cleavage of meizothrombin at Arg-317. Meizothrombin accumulates as an intermediate when prothrombinase is assembled on the membrane of red blood cells. Expressed by the liver and secreted in plasma.

Its subcellular location is the secreted. The protein resides in the extracellular space. It carries out the reaction Selective cleavage of Arg-|-Gly bonds in fibrinogen to form fibrin and release fibrinopeptides A and B.. With respect to regulation, activity is promoted in the presence of negatively charged surfaces, such as polyphosphate and dextran sulfate. Inhibited by SERPINA5. Thrombin, which cleaves bonds after Arg and Lys, converts fibrinogen to fibrin and activates factors V, VII, VIII, XIII, and, in complex with thrombomodulin, protein C. Functions in blood homeostasis, inflammation and wound healing. Activates coagulation factor XI (F11); activation is promoted by the contact with negatively charged surfaces. Triggers the production of pro-inflammatory cytokines, such as MCP-1/CCL2 and IL8/CXCL8, in endothelial cells. The polypeptide is Prothrombin (F2) (Bos taurus (Bovine)).